A 340-amino-acid chain; its full sequence is Protein arginine N-methyltransferase 6 (340 aa).

In terms of domain architecture, SAM-dependent MTase PRMT-type spans D15–G339. H28, R37, G61, E83, and E112 together coordinate S-adenosyl-L-methionine. Active-site residues include E126 and E135.

The protein belongs to the class I-like SAM-binding methyltransferase superfamily. Protein arginine N-methyltransferase family. PRMT6 subfamily.

It localises to the nucleus. It carries out the reaction L-arginyl-[protein] + 2 S-adenosyl-L-methionine = N(omega),N(omega)-dimethyl-L-arginyl-[protein] + 2 S-adenosyl-L-homocysteine + 2 H(+). In terms of biological role, arginine methyltransferase that can catalyze the formation of both omega-N monomethylarginine (MMA) and asymmetrical dimethylarginine (aDMA), with a strong preference for the formation of aDMA. Preferentially methylates arginyl residues present in a glycine and arginine-rich domain and displays preference for monomethylated substrates. Specifically mediates the asymmetric dimethylation of histone H3 'Arg-2' to form H3R2me2a. H3R2me2a represents a specific tag for epigenetic transcriptional repression and is mutually exclusive with methylation on histone H3 'Lys-4' (H3K4me2 and H3K4me3). Acts as a transcriptional repressor of various genes such as HOXA2, THBS1 and TP53. Repression of TP53 blocks cellular senescence. Also methylates histone H2A and H4 'Arg-3' (H2AR3me and H4R3me, respectively). Acts as a regulator of DNA base excision during DNA repair by mediating the methylation of DNA polymerase beta (POLB), leading to the stimulation of its polymerase activity by enhancing DNA binding and processivity. Methylates HMGA1. Regulates alternative splicing events. Acts as a transcriptional coactivator of a number of steroid hormone receptors including ESR1, ESR2, PGR and NR3C1. In Xenopus laevis (African clawed frog), this protein is Protein arginine N-methyltransferase 6 (prmt6).